The following is a 92-amino-acid chain: Small ribosomal subunit protein uS19c (92 aa).

It belongs to the universal ribosomal protein uS19 family.

The protein resides in the plastid. It localises to the chloroplast. Its function is as follows. Protein S19 forms a complex with S13 that binds strongly to the 16S ribosomal RNA. The protein is Small ribosomal subunit protein uS19c of Acorus calamus (Sweet flag).